We begin with the raw amino-acid sequence, 524 residues long: Chromosomal replication initiator protein DnaA (524 aa).

Positions 1 to 72 are domain I, interacts with DnaA modulators; that stretch reads MNDFWQHCSA…DLARDFWNAP (72 aa). Residues 72–187 are domain II; sequence PIEVQFVLDP…GEADSMYERS (116 aa). Residues 188-404 form a domain III, AAA+ region region; the sequence is KLNPVLTFDN…GALRKILAYS (217 aa). ATP contacts are provided by glycine 232, glycine 234, lysine 235, and threonine 236. Residues 405-524 form a domain IV, binds dsDNA region; sequence KFHGREISIE…LHVLEQTLKG (120 aa).

The protein belongs to the DnaA family. Oligomerizes as a right-handed, spiral filament on DNA at oriC.

Its subcellular location is the cytoplasm. Its function is as follows. Plays an essential role in the initiation and regulation of chromosomal replication. ATP-DnaA binds to the origin of replication (oriC) to initiate formation of the DNA replication initiation complex once per cell cycle. Binds the DnaA box (a 9 base pair repeat at the origin) and separates the double-stranded (ds)DNA. Forms a right-handed helical filament on oriC DNA; dsDNA binds to the exterior of the filament while single-stranded (ss)DNA is stabiized in the filament's interior. The ATP-DnaA-oriC complex binds and stabilizes one strand of the AT-rich DNA unwinding element (DUE), permitting loading of DNA polymerase. After initiation quickly degrades to an ADP-DnaA complex that is not apt for DNA replication. Binds acidic phospholipids. This Burkholderia multivorans (strain ATCC 17616 / 249) protein is Chromosomal replication initiator protein DnaA.